A 502-amino-acid polypeptide reads, in one-letter code: Probable zinc metalloprotease MGG_02107 (502 aa).

The first 21 residues, 1-21 (MRSPPGAVAALASVAAQLATA), serve as a signal peptide directing secretion. Positions 182, 202, and 235 each coordinate Zn(2+). A glycan (N-linked (GlcNAc...) asparagine) is linked at N250. A Zn(2+)-binding site is contributed by D262. A disordered region spans residues 284–307 (QGGSPAGESKERAETRASIGGEND). 3 N-linked (GlcNAc...) asparagine glycosylation sites follow: N375, N417, and N427. In terms of domain architecture, Fibronectin type-III spans 414–502 (QVRNVTVDTS…KSPATMPFPG (89 aa)).

This sequence belongs to the peptidase M28 family. M28B subfamily. Requires Zn(2+) as cofactor.

It is found in the secreted. In Pyricularia oryzae (strain 70-15 / ATCC MYA-4617 / FGSC 8958) (Rice blast fungus), this protein is Probable zinc metalloprotease MGG_02107.